Consider the following 379-residue polypeptide: Chaperone protein DnaJ (379 aa).

Residues 5-70 (DYYEVLGLSK…EKKAMYDQYG (66 aa)) enclose the J domain. The CR-type zinc finger occupies 136-214 (GCKKDIRIHT…CHGDGRVHKA (79 aa)). Zn(2+) is bound by residues Cys149, Cys152, Cys166, Cys169, Cys188, Cys191, Cys202, and Cys205. CXXCXGXG motif repeat units lie at residues 149 to 156 (CDTCHGTG), 166 to 173 (CSHCHGSG), 188 to 195 (CPSCHGTG), and 202 to 209 (CRSCHGDG).

The protein belongs to the DnaJ family. In terms of assembly, homodimer. Requires Zn(2+) as cofactor.

It localises to the cytoplasm. In terms of biological role, participates actively in the response to hyperosmotic and heat shock by preventing the aggregation of stress-denatured proteins and by disaggregating proteins, also in an autonomous, DnaK-independent fashion. Unfolded proteins bind initially to DnaJ; upon interaction with the DnaJ-bound protein, DnaK hydrolyzes its bound ATP, resulting in the formation of a stable complex. GrpE releases ADP from DnaK; ATP binding to DnaK triggers the release of the substrate protein, thus completing the reaction cycle. Several rounds of ATP-dependent interactions between DnaJ, DnaK and GrpE are required for fully efficient folding. Also involved, together with DnaK and GrpE, in the DNA replication of plasmids through activation of initiation proteins. This Mannheimia haemolytica (Pasteurella haemolytica) protein is Chaperone protein DnaJ.